The chain runs to 242 residues: Floral homeotic protein AGAMOUS (242 aa).

Positions 19 to 73 (RGKIEIKRIENTTNRQVTFCKRRNGLLKKAYELSVLCDAEVALIVFSTRGRLYEY) constitute an MADS-box domain. The region spanning 103–193 (AQFYQQEASK…RAKIAENERA (91 aa)) is the K-box domain.

Flower. Preferentially expressed in stamen and carpel and weakly in petal. Undetected in leaves and roots.

It localises to the nucleus. In terms of biological role, probable transcription factor involved in regulating genes that determines stamen and carpel development in wild-type flowers. The chain is Floral homeotic protein AGAMOUS (AG2) from Panax ginseng (Korean ginseng).